A 576-amino-acid polypeptide reads, in one-letter code: MARTTFLVSVSLFVSAVLARTVEYGLKISDGEIAPDGVKRNATLVNGGYPGPLIFANKGDTLKVKVQNKLTNPEMYRTTSIHWHGLLQHRNADDDGPSFVTQCPIVPRESYTYTIPLDDQTGTYWYHSHLSSQYVDGLRGPLVIYDPKDPHRRLYDVDDEKTVLIIGDWYHESSKAILASGNITRQRPVSATINGKGRFDPDNTPANPDTLYTLKVKRGKRYRLRVINSSEIASFRFSVEGHKVTVIAADGVSTKPYQVDAFDILAGQRIDCVVEANQEPDTYWINAPLTNVPNKTAQALLVYEEDRRPYHPPKGPYRKWSVSEAIIKYWNHKHKHGRGLLSGHGGLKARMIEGSHHLHSRSVVKRQNETTTVVMDESKLVPLEYPGAACGSKPADLVLDLTFGLNFATGHWMINGIPYESPKIPTLLKILTDEDGVTESDFTKEEHTVILPKNKCIEFNIKGNSGIPITHPVHLHGHTWDVVQFGNNPPNYVNPPRRDVVGSTDAGVRIQFKTDNPGPWFLHCHIDWHLEEGFAMVFAEAPEAVKGGPKSVAVDSQWEGLCGKYDNWLKSNPGQL.

A signal peptide spans 1 to 19; sequence MARTTFLVSVSLFVSAVLA. 2 Plastocyanin-like domains span residues 21–145 and 157–304; these read TVEY…LVIY and VDDE…LVYE. Residue Asn41 is glycosylated (N-linked (GlcNAc...) asparagine). Positions 82, 84, 127, and 129 each coordinate Cu cation. A disulfide bond links Cys103 and Cys562. Asn182, Asn228, Asn294, and Asn368 each carry an N-linked (GlcNAc...) asparagine glycan. Residues 376-576 form the Plastocyanin-like 3 domain; it reads DESKLVPLEY…NWLKSNPGQL (201 aa). Residues His471, His474, His476, His523, Cys524, His525, and His529 each contribute to the Cu cation site.

Belongs to the multicopper oxidase family. As to quaternary structure, homodimer. Cu cation serves as cofactor. In mycelia, at a lower level than LCC4.

It is found in the secreted. The catalysed reaction is 4 hydroquinone + O2 = 4 benzosemiquinone + 2 H2O. Functionally, lignin degradation and detoxification of lignin-derived products. The chain is Laccase-1 (LCC1) from Thanatephorus cucumeris (Black scurf of potato).